The primary structure comprises 275 residues: Vitamin B12-binding protein (275 aa).

Residues 1–19 form the signal peptide; the sequence is MMNKLCFALPLIFSDASFA. In terms of domain architecture, Fe/B12 periplasmic-binding spans 25-272; the sequence is RIISLAPHST…EVCEHFETVR (248 aa). Cys-185 and Cys-265 are disulfide-bonded.

It belongs to the BtuF family. As to quaternary structure, the complex is composed of two ATP-binding proteins (BtuD), two transmembrane proteins (BtuC) and a solute-binding protein (BtuF).

The protein localises to the periplasm. Part of the ABC transporter complex BtuCDF involved in vitamin B12 import. Binds vitamin B12 and delivers it to the periplasmic surface of BtuC. This Vibrio campbellii (strain ATCC BAA-1116) protein is Vitamin B12-binding protein.